The chain runs to 644 residues: Threonine--tRNA ligase (644 aa).

The TGS domain maps to 1-61 (MPVITLPDGS…EKDTKLTIIT (61 aa)). The catalytic stretch occupies residues 242–535 (DHRRIGADLD…LIEHYEGKFP (294 aa)). Zn(2+) is bound by residues C335, H386, and H512.

Belongs to the class-II aminoacyl-tRNA synthetase family. In terms of assembly, homodimer. Requires Zn(2+) as cofactor.

It is found in the cytoplasm. The catalysed reaction is tRNA(Thr) + L-threonine + ATP = L-threonyl-tRNA(Thr) + AMP + diphosphate + H(+). Its function is as follows. Catalyzes the attachment of threonine to tRNA(Thr) in a two-step reaction: L-threonine is first activated by ATP to form Thr-AMP and then transferred to the acceptor end of tRNA(Thr). Also edits incorrectly charged L-seryl-tRNA(Thr). In Nitrosococcus oceani (strain ATCC 19707 / BCRC 17464 / JCM 30415 / NCIMB 11848 / C-107), this protein is Threonine--tRNA ligase.